The sequence spans 319 residues: G-protein coupled receptor 171 (319 aa).

At 1 to 21 (MTNSSTFCPVYRDLEPFTYFF) the chain is on the extracellular side. An N-linked (GlcNAc...) asparagine glycan is attached at N3. Residues 22–42 (YLVFLIGIIGSCFATWAFIQK) traverse the membrane as a helical segment. Topologically, residues 43–48 (TTNHRC) are cytoplasmic. The helical transmembrane segment at 49-69 (VSIYLINLLTADFLLTLALPV) threads the bilayer. At 70–89 (KIIVDLGVAPWKLRIFHCQV) the chain is on the extracellular side. Residues 90 to 110 (TACLIYINMYLSIIFLAFVSI) traverse the membrane as a helical segment. At 111–132 (DRCLQLIHSCKIYRIQEPGFAK) the chain is on the cytoplasmic side. A helical transmembrane segment spans residues 133–153 (MISAVVWLMVLLIMVPNMVIP). At 154–181 (IKDIKEKSNVGCMEFKKEFGRNWHLLTN) the chain is on the extracellular side. Residues 182 to 202 (FICVAIFLNFSVIILISNFLA) form a helical membrane-spanning segment. Residues 203 to 224 (IRQLYRNRDNTNYPSVKSALLH) lie on the Cytoplasmic side of the membrane. The chain crosses the membrane as a helical span at residues 225–245 (ILLVTASYIICFVPYHAVRIP). Residues 246–268 (YTLSQTEVISDCSTRIALFKAKE) are Extracellular-facing. The chain crosses the membrane as a helical span at residues 269 to 289 (ATLLLAVSNLCFDPILYYHLS). The Cytoplasmic portion of the chain corresponds to 290–319 (KAFRLKVTETFASPKKSKPLEERLRSENDV).

Belongs to the G-protein coupled receptor 1 family. In terms of tissue distribution, highly expressed in hypothalamus, including the arcuate nucleus, paraventricular nucleus and dorsomedial hypothalamus. Expressed in periaqueductal gray (at protein level), found primarily in GABAergic neurons and to a lesser extent in glutamatergic neurons. Expressed in T cells and natural killer cells.

The protein localises to the cell membrane. G-protein coupled receptor for Big LEN, a 16-amino acid neuropeptide produced from the precursor protein, proSAAS (encoded by PCSK1N). Acts through a G(i)-alpha-mediated pathway in response to Big LEN. Big LEN-GPR171 system plays an important role in regulating feeding and metabolism. Also plays a role in modulating fear and anxiety-like behaviors in the basolateral amygdala. Big LEN-GPR171 modulates the mu-type opioid receptor signaling and antinociception. Acts as a negative regulator T cell function. This is G-protein coupled receptor 171 (Gpr171) from Mus musculus (Mouse).